Consider the following 491-residue polypeptide: V-type proton ATPase subunit B 1 (491 aa).

Arg-380 contributes to the ATP binding site.

It belongs to the ATPase alpha/beta chains family. As to quaternary structure, V-ATPase is a heteromultimeric enzyme made up of two complexes: the ATP-hydrolytic V1 complex and the proton translocation V0 complex. The V1 complex consists of three catalytic AB heterodimers that form a heterohexamer, three peripheral stalks each consisting of EG heterodimers, one central rotor including subunits D and F, and the regulatory subunits C and H. The proton translocation complex V0 consists of the proton transport subunit a, a ring of proteolipid subunits c9c'', rotary subunit d, subunits e and f, and the accessory subunits vah-19/Ac45 and vah-20/PRR. In terms of tissue distribution, expressed ubiquitously. Highly expressed in the H-shaped excretory cell, the excretory pore, the intestine, and hypodermal cells. Expressed in the nervous system. Expressed at low levels in muscles.

Its function is as follows. Non-catalytic subunit of the V1 complex of vacuolar(H+)-ATPase (V-ATPase), a multisubunit enzyme composed of a peripheral complex (V1) that hydrolyzes ATP and a membrane integral complex (V0) that translocates protons. V-ATPase is responsible for acidifying and maintaining the pH of intracellular compartments and in some cell types, is targeted to the plasma membrane, where it is responsible for acidifying the extracellular environment. Essential for the proper assembly and activity of V-ATPase. Required maternally for early embryogenesis and zygotically during morphogenesis. Specifically, involved in the clearance of apoptotic cell corpses in embryos. Also, during embryonic development, the V-ATPase is required to repress fusion of epidermal cells probably by negatively regulating eff-1-mediated cell fusion. In neurons, required for necrotic cell death by promoting intracellular acidification. Required for cell death induced by hypoxia. Required for acidification of synaptic vesicles and the release of neurotransmitters from adult neurons. This is V-type proton ATPase subunit B 1 from Caenorhabditis elegans.